The chain runs to 597 residues: Kelch-like protein 21 (597 aa).

The BTB domain maps to 35-103; that stretch reads LDVTLEAAGG…SYTGRVAVSG (69 aa). The BACK domain maps to 138 to 239; the sequence is CLDMQDFAEA…RRFYLLAHVE (102 aa). Kelch repeat units lie at residues 287 to 335, 336 to 382, 384 to 422, 423 to 470, 472 to 512, and 513 to 560; these read ILVL…ALGN, DIYV…VLNG, LYVV…ACRG, RLYA…TLNG, MYFV…ALGG, and KLYV…SIFR. The interval 570–597 is disordered; the sequence is GRGFELNSGSSDVDAGHHRLPQNPEELQ.

In terms of assembly, component of the BCR(KLHL21) E3 ubiquitin ligase complex, at least composed of CUL3, KLHL21 and RBX1.

Its subcellular location is the cytoplasm. The protein localises to the cytoskeleton. The protein resides in the spindle. It participates in protein modification; protein ubiquitination. Substrate-specific adapter of BCR (BTB-CUL3-RBX1) E3 ubiquitin-protein ligase complex required for efficient chromosome alignment and cytokinesis. The BCR(KLHL21) E3 ubiquitin ligase complex regulates localization of the chromosomal passenger complex (CPC) from chromosomes to the spindle midzone in anaphase and mediates the ubiquitination of AURKB. Ubiquitination of AURKB by BCR(KLHL21) E3 ubiquitin ligase complex may not lead to its degradation by the proteasome. The protein is Kelch-like protein 21 (Klhl21) of Rattus norvegicus (Rat).